The following is a 512-amino-acid chain: Protein arginine N-methyltransferase 2 (512 aa).

The interval 67–103 (TSNIDDLPLPPPIQEVEEEEPTQQNIEQQQQTQDESD) is disordered. Low complexity predominate over residues 88–99 (TQQNIEQQQQTQ). Positions 120 to 508 (DEEYFSSYSK…KTNPFDYSYQ (389 aa)) constitute an SAM-dependent MTase PRMT-type domain. S-adenosyl-L-methionine-binding residues include histidine 133, arginine 142, glycine 166, and glutamate 217. Active-site residues include glutamate 231 and glutamate 240. The tract at residues 375 to 395 (DDDDNDNNNNNNDNSNDDENK) is disordered.

It belongs to the class I-like SAM-binding methyltransferase superfamily. Protein arginine N-methyltransferase family.

The protein localises to the cytoplasm. It localises to the nucleus. It carries out the reaction L-arginyl-[protein] + 2 S-adenosyl-L-methionine = N(omega),N(omega)-dimethyl-L-arginyl-[protein] + 2 S-adenosyl-L-homocysteine + 2 H(+). Functionally, arginine methyltransferase that methylates the guanidino nitrogens of arginyl residues in some proteins such as histones. In Dictyostelium discoideum (Social amoeba), this protein is Protein arginine N-methyltransferase 2 (prmt2).